Here is a 490-residue protein sequence, read N- to C-terminus: Ribulose bisphosphate carboxylase large chain (490 aa).

Positions 127 and 177 each coordinate substrate. Residue Lys179 is the Proton acceptor of the active site. Lys181 is a substrate binding site. Residues Lys205, Asp207, and Glu208 each contribute to the Mg(2+) site. N6-carboxylysine is present on Lys205. His297 (proton acceptor) is an active-site residue. The substrate site is built by Arg298, His330, and Ser382.

It belongs to the RuBisCO large chain family. Type I subfamily. In terms of assembly, heterohexadecamer of 8 large chains and 8 small chains. The cofactor is Mg(2+).

The protein resides in the plastid. It is found in the chloroplast. It catalyses the reaction 2 (2R)-3-phosphoglycerate + 2 H(+) = D-ribulose 1,5-bisphosphate + CO2 + H2O. The catalysed reaction is D-ribulose 1,5-bisphosphate + O2 = 2-phosphoglycolate + (2R)-3-phosphoglycerate + 2 H(+). Its function is as follows. RuBisCO catalyzes two reactions: the carboxylation of D-ribulose 1,5-bisphosphate, the primary event in carbon dioxide fixation, as well as the oxidative fragmentation of the pentose substrate in the photorespiration process. Both reactions occur simultaneously and in competition at the same active site. The chain is Ribulose bisphosphate carboxylase large chain from Detonula confervacea (Marine diatom).